The primary structure comprises 45 residues: MTSGNNINQPVTYPIFTVRWLAVHTLGVPTVFFLGAIAAMQFIHR.

A helical membrane pass occupies residues Trp20 to Ala36. His24 serves as a coordination point for heme.

Belongs to the PsbE/PsbF family. In terms of assembly, heterodimer of an alpha subunit and a beta subunit. PSII is composed of 1 copy each of membrane proteins PsbA, PsbB, PsbC, PsbD, PsbE, PsbF, PsbH, PsbI, PsbJ, PsbK, PsbL, PsbM, PsbT, PsbX, PsbY, PsbZ, Psb30/Ycf12, peripheral proteins PsbO, CyanoQ (PsbQ), PsbU, PsbV and a large number of cofactors. It forms dimeric complexes. Requires heme b as cofactor.

The protein resides in the cellular thylakoid membrane. This b-type cytochrome is tightly associated with the reaction center of photosystem II (PSII). PSII is a light-driven water:plastoquinone oxidoreductase that uses light energy to abstract electrons from H(2)O, generating O(2) and a proton gradient subsequently used for ATP formation. It consists of a core antenna complex that captures photons, and an electron transfer chain that converts photonic excitation into a charge separation. This chain is Cytochrome b559 subunit beta, found in Nostoc punctiforme (strain ATCC 29133 / PCC 73102).